Here is a 193-residue protein sequence, read N- to C-terminus: MAFPPIILASQSPRRKEILQLSGLSFSTVSIETPEHLDPAESIESNVRRIAEEKAKAAIQSFQNDTRDPVLLGADTVVAIDGRILGKPANAAEALEMLLQLQGRTHEVHTGFALLQSAHLYSECATTEVTLNKMTEEEILHYINTAAPFDKAGSYGIQDPVMACFVSSITGCYYNVMGLPLSRVWMALQKLRS.

Residue aspartate 75 is the Proton acceptor of the active site.

It belongs to the Maf family. YhdE subfamily. The cofactor is a divalent metal cation.

It localises to the cytoplasm. The enzyme catalyses dTTP + H2O = dTMP + diphosphate + H(+). It carries out the reaction UTP + H2O = UMP + diphosphate + H(+). In terms of biological role, nucleoside triphosphate pyrophosphatase that hydrolyzes dTTP and UTP. May have a dual role in cell division arrest and in preventing the incorporation of modified nucleotides into cellular nucleic acids. The sequence is that of dTTP/UTP pyrophosphatase from Chlorobium phaeovibrioides (strain DSM 265 / 1930) (Prosthecochloris vibrioformis (strain DSM 265)).